A 651-amino-acid chain; its full sequence is Peptidoglycan D,D-transpeptidase MrdA (651 aa).

The chain crosses the membrane as a helical span at residues 30 to 50 (LVAFLGILLLTGVLFTNIYQL). Ser-338 acts as the Acyl-ester intermediate in catalysis.

This sequence belongs to the transpeptidase family. MrdA subfamily.

The protein localises to the cell inner membrane. It catalyses the reaction Preferential cleavage: (Ac)2-L-Lys-D-Ala-|-D-Ala. Also transpeptidation of peptidyl-alanyl moieties that are N-acyl substituents of D-alanine.. The protein operates within cell wall biogenesis; peptidoglycan biosynthesis. In terms of biological role, catalyzes cross-linking of the peptidoglycan cell wall. In Haemophilus influenzae (strain ATCC 51907 / DSM 11121 / KW20 / Rd), this protein is Peptidoglycan D,D-transpeptidase MrdA.